We begin with the raw amino-acid sequence, 570 residues long: Transmembrane 7 superfamily member 3 (570 aa).

The N-terminal stretch at 1–21 (MGFLQLLVVAVLASEHRVAGA) is a signal peptide. N-linked (GlcNAc...) asparagine glycans are attached at residues asparagine 27, asparagine 61, asparagine 75, asparagine 87, and asparagine 264. A run of 7 helical transmembrane segments spans residues 296–313 (VFFT…FFGH), 320–342 (LFFI…LTPI), 347–369 (NLIL…WWRF), 371–393 (ILSI…VTFF), 408–430 (FWVT…LRIL), 437–459 (VIGS…SYIT), and 479–501 (PFQT…GITL).

As to expression, widely expressed. Highly expressed in kidney and pancreas.

It localises to the cell membrane. Its function is as follows. Involved in the inhibition of cytokine-induced death of pancreatic beta cells. Involved in the promotion of insulin secretion from pancreatic beta cells. Is a downstream transcriptional target of p53/TP53, and acts as a pro-survival homeostatic factor that attenuates the development of cellular stress. Maintains protein homeostasis and promotes cell survival through attenuation of endoplasmic reticulum (ER) stress and the subsequent induction of unfolded protein response (UPR). This is Transmembrane 7 superfamily member 3 (TM7SF3) from Homo sapiens (Human).